A 107-amino-acid chain; its full sequence is C-X-C motif chemokine 3 (107 aa).

The N-terminal stretch at 1–34 (MAHATLSAAPSNPRLLRVALLLLLLVAASRRAAG) is a signal peptide. Intrachain disulfides connect cysteine 43/cysteine 69 and cysteine 45/cysteine 85.

The protein belongs to the intercrine alpha (chemokine CxC) family. In terms of processing, N-terminal processed form GRO-gamma(5-73) is produced by proteolytic cleavage after secretion from peripheral blood monocytes.

The protein localises to the secreted. Functionally, ligand for CXCR2. Has chemotactic activity for neutrophils. May play a role in inflammation and exert its effects on endothelial cells in an autocrine fashion. In vitro, the processed form GRO-gamma(5-73) shows a fivefold higher chemotactic activity for neutrophilic granulocytes. This chain is C-X-C motif chemokine 3 (CXCL3), found in Homo sapiens (Human).